Reading from the N-terminus, the 310-residue chain is Homoserine kinase (310 aa).

91 to 101 (PIGSGLGSSAC) is an ATP binding site.

This sequence belongs to the GHMP kinase family. Homoserine kinase subfamily.

Its subcellular location is the cytoplasm. The enzyme catalyses L-homoserine + ATP = O-phospho-L-homoserine + ADP + H(+). It functions in the pathway amino-acid biosynthesis; L-threonine biosynthesis; L-threonine from L-aspartate: step 4/5. In terms of biological role, catalyzes the ATP-dependent phosphorylation of L-homoserine to L-homoserine phosphate. This is Homoserine kinase from Escherichia coli O81 (strain ED1a).